The chain runs to 99 residues: Defensin-A4 (99 aa).

Positions 1–21 (MKTLCLLFAVLCLVTWTQARG) are cleaved as a signal peptide. A propeptide spanning residues 22 to 68 (AEVEENLTAQDGEVDIAGDNGDVQLTLNTDDFESFTLKTLTLGHPRV) is cleaved from the precursor. Disulfide bonds link cysteine 73-cysteine 97, cysteine 75-cysteine 89, and cysteine 79-cysteine 96.

Belongs to the alpha-defensin family. Lowly expressed in spleen, and expressed at lower levels in kidney and lung.

It is found in the secreted. In terms of biological role, has antimicrobial activity. The protein is Defensin-A4 of Ornithorhynchus anatinus (Duckbill platypus).